The primary structure comprises 498 residues: Angiopoietin-1 (498 aa).

A signal peptide spans 1–19; sequence MTVFLSFAFFAAILTHIGC. Residues 81 to 119 are a coiled coil; that stretch reads QKLQHLEHVMENYTQWLQKLENYIVENMKSEMAQIQQNA. Asn-92, Asn-122, Asn-154, Asn-243, and Asn-295 each carry an N-linked (GlcNAc...) asparagine glycan. A coiled-coil region spans residues 153–261; the sequence is LNQTSRLEIQ…LELMDTVHNL (109 aa). The region spanning 277-497 is the Fibrinogen C-terminal domain; the sequence is REEEKPFRDC…STTMMIRPLD (221 aa). 2 disulfide bridges follow: Cys-286/Cys-315 and Cys-439/Cys-452.

In terms of assembly, homooligomer. Interacts with TEK/TIE2. Interacts with SVEP1/polydom. Interacts with THBD; this interaction significantly inhibits the generation of activated PC and TAFIa/CPB2 by the thrombin/thrombomodulin complex.

It is found in the secreted. In terms of biological role, binds and activates TEK/TIE2 receptor by inducing its dimerization and tyrosine phosphorylation. Plays an important role in the regulation of angiogenesis, endothelial cell survival, proliferation, migration, adhesion and cell spreading, reorganization of the actin cytoskeleton, but also maintenance of vascular quiescence. Required for normal angiogenesis and heart development during embryogenesis. After birth, activates or inhibits angiogenesis, depending on the context. Inhibits angiogenesis and promotes vascular stability in quiescent vessels, where endothelial cells have tight contacts. In quiescent vessels, ANGPT1 oligomers recruit TEK to cell-cell contacts, forming complexes with TEK molecules from adjoining cells, and this leads to preferential activation of phosphatidylinositol 3-kinase and the AKT1 signaling cascades. In migrating endothelial cells that lack cell-cell adhesions, ANGT1 recruits TEK to contacts with the extracellular matrix, leading to the formation of focal adhesion complexes, activation of PTK2/FAK and of the downstream kinases MAPK1/ERK2 and MAPK3/ERK1, and ultimately to the stimulation of sprouting angiogenesis. Mediates blood vessel maturation/stability. Implicated in endothelial developmental processes later and distinct from that of VEGF. Appears to play a crucial role in mediating reciprocal interactions between the endothelium and surrounding matrix and mesenchyme. The chain is Angiopoietin-1 (Angpt1) from Mus musculus (Mouse).